A 461-amino-acid chain; its full sequence is MLAAARALRGPRPRWPTPAREHWTPAGRSRSRREAAEAEADVPVFQYVGERAARADRVFVWGFSFSGALGVPSFVVPSSGPGPRAGLRPRRRIQPVPYRLELDHKISSAACGYGFTLLSSKTKDVTKVWGMGLNKDSQLGFHRSRKDKTRGYEYVLEPSPVPLPLDRPQETKVLQVSCGRAHSLVLTDREGVFSMGNNSHGQCGRKVVEDEVYSESHKVHRMQDFDGQVVQVVCGQDHSLFLTDKGEVYSCGWGADGQTGLGHYNITSTPSKLGGDLAGVTVVQVATYGDCCLALSADGGVFGWGNSEYLQLASVTDSTQVNVPRCLPFSGVGKVKQVACGGTGCAVLNAEGHVFVWGYGILGKGPKLLETAIPEMIPPTLFGLTEFNPEVQVSQIRCGLSHFAALTNKGELFVWGKNIRGCLGIGRLEDQYFPWRVTMPGEPVDVACGVDHMVTLAKSFI.

Over residues 1 to 10 the composition is skewed to low complexity; it reads MLAAARALRG. The N-terminal 34 residues, 1–34, are a transit peptide targeting the mitochondrion; that stretch reads MLAAARALRGPRPRWPTPAREHWTPAGRSRSRRE. A disordered region spans residues 1–35; it reads MLAAARALRGPRPRWPTPAREHWTPAGRSRSRREA. RCC1 repeat units lie at residues 55–121, 125–188, 190–244, 245–297, 298–350, 352–408, and 409–458; these read ADRV…LSSK, VTKV…VLTD, EGVF…FLTD, KGEV…ALSA, DGGV…VLNA, GHVF…ALTN, and KGEL…TLAK.

Forms a regulatory protein-RNA complex, consisting of RCC1L, NGRN, RPUSD3, RPUSD4, TRUB2, FASTKD2 and 16S mt-rRNA. Interacts with 16S mt-rRNA; this interaction is direct. Interacts with OPA1; this interaction is direct. As to expression, at E8.5, broadly expressed in yolk sac placenta, decidua, and embryo, with highest levels found in the trophoblast giant cells (TGCs) and ectoplacental cone (at protein level).

It is found in the mitochondrion inner membrane. Guanine nucleotide exchange factor (GEF) for mitochondrial dynamin-related GTPase OPA1. Activates OPA1, by exchanging bound GDP for free GTP, and drives OPA1 and MFN1-dependent mitochondrial fusion. Plays an essential role in mitochondrial ribosome biogenesis. As a component of a functional protein-RNA module, consisting of RCC1L, NGRN, RPUSD3, RPUSD4, TRUB2, FASTKD2 and 16S mitochondrial ribosomal RNA (16S mt-rRNA), controls 16S mt-rRNA abundance and is required for intra-mitochondrial translation of core subunits of the oxidative phosphorylation system. In Mus musculus (Mouse), this protein is RCC1-like G exchanging factor-like protein.